The chain runs to 388 residues: Lysocardiolipin acyltransferase 1 (388 aa).

2 consecutive transmembrane segments (helical) span residues 9–29 (FLLF…GPLL) and 46–66 (IVAT…GVKV). An HXXXXD motif motif is present at residues 85-90 (HRTRLD). Helical transmembrane passes span 321–341 (IILV…CASL) and 342–362 (CLCP…LCQQ).

Belongs to the 1-acyl-sn-glycerol-3-phosphate acyltransferase family.

The protein localises to the endoplasmic reticulum membrane. The enzyme catalyses a 1-acyl-sn-glycero-3-phosphate + an acyl-CoA = a 1,2-diacyl-sn-glycero-3-phosphate + CoA. It catalyses the reaction a 1-acyl-sn-glycero-3-phospho-(1D-myo-inositol) + an acyl-CoA = a 1,2-diacyl-sn-glycero-3-phospho-(1D-myo-inositol) + CoA. The catalysed reaction is 1-acyl-sn-glycero-3-phospho-(1'-sn-glycerol) + an acyl-CoA = a 1,2-diacyl-sn-glycero-3-phospho-(1'-sn-glycerol) + CoA. It carries out the reaction 1-hexadecanoyl-sn-glycero-3-phosphate + (9Z)-octadecenoyl-CoA = 1-hexadecanoyl-2-(9Z-octadecenoyl)-sn-glycero-3-phosphate + CoA. The enzyme catalyses 1-(9Z-octadecenoyl)-sn-glycero-3-phosphate + (9Z)-octadecenoyl-CoA = 1,2-di-(9Z-octadecenoyl)-sn-glycero-3-phosphate + CoA. It catalyses the reaction 1-(9Z,12Z)-octadecadienoyl-sn-glycero-3-phosphate + (9Z)-octadecenoyl-CoA = 1-(9Z,12Z)-octadecadienoyl-2-(9Z)-octadecenoyl-sn-glycero-3-phosphate + CoA. The catalysed reaction is 1-(9Z,12Z,15Z)-octadecatrienoyl-sn-glycero-3-phosphate + (9Z)-octadecenoyl-CoA = 1-(9Z,12Z,15Z)-octadecatrienoyl-2-(9Z)-octadecenoyl-sn-glycero-3-phosphate + CoA. It carries out the reaction 1-(9Z-octadecenoyl)-sn-glycero-3-phosphate + hexadecanoyl-CoA = 1-(9Z)-octadecenoyl-2-hexadecanoyl-sn-glycero-3-phosphate + CoA. The enzyme catalyses 1-(9Z-octadecenoyl)-sn-glycero-3-phosphate + octadecanoyl-CoA = 1-(9Z-octadecenoyl)-2-octadecanoyl-sn-glycero-3-phosphate + CoA. It catalyses the reaction 1-acyl-sn-glycero-3-phospho-(1'-sn-glycerol) + (9Z)-octadecenoyl-CoA = 1-acyl-2-(9Z-octadecenoyl)-sn-glycero-3-phospho-(1'-sn-glycerol) + CoA. The catalysed reaction is a 1-acyl-sn-glycero-3-phospho-(1D-myo-inositol) + (9Z)-octadecenoyl-CoA = a 1-acyl-2-(9Z-octadecenoyl)-sn-glycero-3-phospho-(1D-myo-inositol) + CoA. It carries out the reaction 1-hexadecanoyl-sn-glycero-3-phospho-(1D-myo-inositol) + hexadecanoyl-CoA = 1,2-dihexadecanoyl-sn-glycero-3-phospho-(1D-myo-inositol) + CoA. The enzyme catalyses 1-hexadecanoyl-sn-glycero-3-phospho-(1D-myo-inositol) + octadecanoyl-CoA = 1-hexadecanoyl-2-octadecanoyl-sn-glycero-3-phospho-(1D-myo-inositol) + CoA. It catalyses the reaction 1-hexadecanoyl-sn-glycero-3-phospho-(1D-myo-inositol) + (9Z)-octadecenoyl-CoA = 1-hexadecanoyl-2-(9Z-octadecenoyl)-sn-glycero-3-phospho-(1D-myo-inositol) + CoA. The catalysed reaction is 1-hexadecanoyl-sn-glycero-3-phospho-(1D-myo-inositol) + (9Z,12Z)-octadecadienoyl-CoA = 1-hexadecanoyl-2-(9Z,12Z-octadecadienoyl)-sn-glycero-3-phospho-(1D-myo-inositol) + CoA. It carries out the reaction 1-hexadecanoyl-sn-glycero-3-phospho-(1D-myo-inositol) + (5Z,8Z,11Z,14Z)-eicosatetraenoyl-CoA = 1-hexadecanoyl-2-(5Z,8Z,11Z,14Z-eicosatetraenoyl)-sn-glycero-3-phospho-D-myo-inositol + CoA. The enzyme catalyses 1-hexadecanoyl-sn-glycero-3-phospho-(1'-sn-glycerol) + hexadecanoyl-CoA = 1,2-dihexadecanoyl-sn-glycero-3-phospho-(1'-sn-glycerol) + CoA. It catalyses the reaction 1-hexadecanoyl-sn-glycero-3-phospho-(1'-sn-glycerol) + octadecanoyl-CoA = 1-hexadecanoyl-2-octadecanoyl-sn-glycero-3-phospho-(1'-sn-glycerol) + CoA. The catalysed reaction is 1-hexadecanoyl-sn-glycero-3-phospho-(1'-sn-glycerol) + (9Z)-octadecenoyl-CoA = 1-hexadecanoyl-2-(9Z-octadecenoyl)-sn-glycero-3-phospho-(1'-sn-glycerol) + CoA. It carries out the reaction 1-hexadecanoyl-sn-glycero-3-phospho-(1'-sn-glycerol) + (9Z,12Z)-octadecadienoyl-CoA = 1-hexadecanoyl-2-(9Z,12Z-octadecadienoyl)-sn-glycero-3-phospho-(1'-sn-glycerol) + CoA. The enzyme catalyses 1-tetradecanoyl-sn-glycero-3-phospho-(1'-sn-glycerol) + (9Z)-octadecenoyl-CoA = 1-tetradecanoyl-2-(9Z-octadecenoyl)-sn-glycero-3-phospho-(1'-sn-glycerol) + CoA. It catalyses the reaction 1-octadecanoyl-sn-glycero-3-phospho-(1'-sn-glycerol) + (9Z)-octadecenoyl-CoA = 1-octadecanoyl-2-(9Z-octadecenoyl)-sn-glycero-3-phospho-(1'-sn-glycerol) + CoA. The catalysed reaction is 1-(9Z-octadecenoyl)-sn-glycero-3-phospho-(1'-sn-glycerol) + (9Z)-octadecenoyl-CoA = 1,2-di-(9Z-octadecenoyl)-sn-glycero-3-phospho-(1'-sn-glycerol) + CoA. It carries out the reaction 1-hexadecanoyl-sn-glycero-3-phospho-(1D-myo-inositol) + dodecanoyl-CoA = 1-hexadecanoyl-2-dodecanoyl-sn-glycero-3-phospho-(1D-myo-inositol) + CoA. The enzyme catalyses 1',3'-bis-[1-acyl-sn-glycero-3-phospho]-glycerol + (9Z)-octadecenoyl-CoA = 1'-[1-acyl-2-(9Z)-octadecenoyl-sn-glycero-3-phospho],3'-[1-acyl,2-hydroxy-sn-glycero-3-phospho]-glycerol + CoA. It catalyses the reaction 1'-[1,2-diacyl-sn-glycero-3-phospho],3'-[1-acyl-sn-glycero-3-phospho]-glycerol + (9Z)-octadecenoyl-CoA = 1'-[1,2-diacyl-sn-glycero-3-phospho],3'-[1-acyl,2-(9Z)-octadecenoyl-sn-glycero-3-phospho]-glycerol + CoA. The catalysed reaction is 1'-[1,2-diacyl-sn-glycero-3-phospho],3'-[1-acyl-sn-glycero-3-phospho]-glycerol + (9Z,12Z)-octadecadienoyl-CoA = 1'-[1,2-diacyl-sn-glycero-3-phospho],3'-[1-acyl,2-(9Z,12Z)-octadecadienoyl-sn-glycero-3-phospho]-glycerol + CoA. It carries out the reaction 1'-[1,2-diacyl-sn-glycero-3-phospho],3'-[1-acyl-sn-glycero-3-phospho]-glycerol + dodecanoyl-CoA = 1'-[1,2-diacyl-sn-glycero-3-phospho],3'-[1-acyl,2-dodecanoyl-sn-glycero-3-phospho]-glycerol + CoA. The enzyme catalyses 1',3'-bis-[1-acyl-sn-glycero-3-phospho]-glycerol + dodecanoyl-CoA = 1'-[1-acyl-2-dodecanoyl-sn-glycero-3-phospho],3'-[1-acyl,2-hydroxy-sn-glycero-3-phospho]-glycerol + CoA. It catalyses the reaction a 1-acyl-sn-glycero-3-phosphate + (9Z)-octadecenoyl-CoA = a 1-acyl-2-(9Z-octadecenoyl)-sn-glycero-3-phosphate + CoA. The catalysed reaction is 1',3'-bis-[1-acyl-sn-glycero-3-phospho]-glycerol + (9Z,12Z)-octadecadienoyl-CoA = 1'-[1-acyl-2-(9Z,12Z)-octadecadienoyl-sn-glycero-3-phospho],3'-[1-acyl,2-hydroxy-sn-glycero-3-phospho]-glycerol + CoA. It carries out the reaction 1',3'-bis-[1-acyl-sn-glycero-3-phospho]-glycerol + hexadecanoyl-CoA = 1'-[1-acyl-2-hexadecanoyl-sn-glycero-3-phospho],3'-[1-acyl,2-hydroxy-sn-glycero-3-phospho]-glycerol + CoA. The enzyme catalyses 1',3'-bis-[1-acyl-sn-glycero-3-phospho]-glycerol + octadecanoyl-CoA = 1'-[1-acyl-2-octadecanoyl-sn-glycero-3-phospho],3'-[1-acyl,2-hydroxy-sn-glycero-3-phospho]-glycerol + CoA. It catalyses the reaction 1'-[1,2-diacyl-sn-glycero-3-phospho],3'-[1-acyl-sn-glycero-3-phospho]-glycerol + octanoyl-CoA = 1'-[1,2-diacyl-sn-glycero-3-phospho],3'-[1-acyl,2-octanoyl-sn-glycero-3-phospho]-glycerol + CoA. The catalysed reaction is 1',3'-bis-[1-acyl-sn-glycero-3-phospho]-glycerol + octanoyl-CoA = 1'-[1-acyl-2-octanoyl-sn-glycero-3-phospho],3'-[1-acyl,2-hydroxy-sn-glycero-3-phospho]-glycerol + CoA. It carries out the reaction 1'-[1,2-diacyl-sn-glycero-3-phospho],3'-[1-acyl-sn-glycero-3-phospho]-glycerol + hexadecanoyl-CoA = 1'-[1,2-diacyl-sn-glycero-3-phospho],3'-[1-acyl,2-hexadecanoyl-sn-glycero-3-phospho]-glycerol + CoA. The enzyme catalyses 1'-[1,2-diacyl-sn-glycero-3-phospho],3'-[1-acyl-sn-glycero-3-phospho]-glycerol + (5Z,8Z,11Z,14Z)-eicosatetraenoyl-CoA = 1'-[1,2-diacyl-sn-glycero-3-phospho],3'-[1-acyl,2-(5Z,8Z,11Z,14Z)-eicosatetraenoyl-sn-glycero-3-phospho]-glycerol + CoA. It catalyses the reaction 1',3'-bis-[1-acyl-sn-glycero-3-phospho]-glycerol + (5Z,8Z,11Z,14Z)-eicosatetraenoyl-CoA = 1'-[1-acyl-2-(5Z,8Z,11Z,14Z)-eicosatetraenoyl-sn-glycero-3-phospho],3'-[1-acyl,2-hydroxy-sn-glycero-3-phospho]-glycerol + CoA. The catalysed reaction is a 1-acyl-sn-glycero-3-phospho-(1D-myo-inositol) + octadecanoyl-CoA = a 1-acyl-2-octadecanoyl-sn-glycero-3-phospho-(1D-myo-inositol) + CoA. It carries out the reaction a 2-acyl-sn-glycero-3-phospho-D-myo-inositol + octadecanoyl-CoA = 1-octadecanoyl-2-acyl-sn-glycero-3-phospho-1D-myo-inositol + CoA. It functions in the pathway phospholipid metabolism; CDP-diacylglycerol biosynthesis; CDP-diacylglycerol from sn-glycerol 3-phosphate: step 2/3. Functionally, exhibits acyl-CoA:lysocardiolipin acyltransferase (ALCAT) activity; catalyzes the reacylation of lyso-cardiolipin to cardiolipin (CL), a key step in CL remodeling. Recognizes both monolysocardiolipin and dilysocardiolipin as substrates with a preference for linoleoyl-CoA and oleoyl-CoA as acyl donors. Also exhibits 1-acyl-sn-glycerol-3-phosphate acyltransferase activity (AGPAT) activity; converts 1-acyl-sn-glycerol-3- phosphate (lysophosphatidic acid or LPA) into 1,2-diacyl-sn-glycerol-3- phosphate (phosphatidic acid or PA) by incorporating an acyl moiety at the sn-2 position of the glycerol backbone. Possesses both lysophosphatidylinositol acyltransferase (LPIAT) and lysophosphatidylglycerol acyltransferase (LPGAT) activities. Required for establishment of the hematopoietic and endothelial lineages. In Danio rerio (Zebrafish), this protein is Lysocardiolipin acyltransferase 1 (lclat1).